The sequence spans 1620 residues: Putative zinc carboxypeptidase (1620 aa).

Topologically, residues 1–1367 (MLFKNEDSGN…SYDFLYFDEN (1367 aa)) are extracellular. N19 is a glycosylation site (N-linked (GlcNAc...) asparagine). The interval 32–74 (RNDNKNNDNEDNKQDDEEKNDEDDNKSNLLLEENEENKRQGDK) is disordered. Basic and acidic residues predominate over residues 33-43 (NDNKNNDNEDN). Residues 44–55 (KQDDEEKNDEDD) show a composition bias toward acidic residues. 2 N-linked (GlcNAc...) asparagine glycosylation sites follow: N56 and N102. Residues 309–328 (GNHYDAHESTNTYDEEKTRE) form a disordered region. N-linked (GlcNAc...) asparagine glycans are attached at residues N354, N487, N508, N529, N550, N571, N589, N687, N802, and N1010. Residues 497–559 (VNNLDSTVNY…NSTGNNINNI (63 aa)) are possible malaria epitope. The 258-residue stretch at 1004–1261 (GENKKNNGTK…FYVQNYFEGY (258 aa)) folds into the Peptidase M14 domain. Zn(2+) is bound by residues H1059 and E1062. Residues N1064 and N1141 are each glycosylated (N-linked (GlcNAc...) asparagine). H1155 contributes to the Zn(2+) binding site. Catalysis depends on E1229, which acts as the Proton donor/acceptor. A disordered region spans residues 1279–1329 (NIKGDDNINGDDNIKGGDNIKGDDNIKRDDNFQRDDNFQRDDNFQRGDNFH). A helical transmembrane segment spans residues 1368–1388 (LLFMTGVSFGICLFKFINFLS). At 1389 to 1620 (YHKSSICRRT…SKRKKVIVIL (232 aa)) the chain is on the cytoplasmic side. The tract at residues 1560–1620 (PNGKYKGPGF…SKRKKVIVIL (61 aa)) is disordered. Basic and acidic residues predominate over residues 1581 to 1597 (NKNESKTEKKSKTENKS). Over residues 1598-1620 (KSKSKNKSKSKNKSKRKKVIVIL) the composition is skewed to basic residues.

Belongs to the peptidase M14 family. Requires Zn(2+) as cofactor.

Its subcellular location is the membrane. The polypeptide is Putative zinc carboxypeptidase (Plasmodium falciparum (isolate 3D7)).